We begin with the raw amino-acid sequence, 265 residues long: Cytochrome c oxidase subunit 3 (265 aa).

Transmembrane regions (helical) follow at residues 16–36, 41–61, 81–101, 162–182, 200–220, and 245–265; these read PWPI…VMYM, GGAT…FVWW, GPRY…FALF, AVYA…FQGM, FFLA…FSIV, and WHFV…WGGI.

Belongs to the cytochrome c oxidase subunit 3 family. As to quaternary structure, component of the cytochrome c oxidase (complex IV, CIV), a multisubunit enzyme composed of a catalytic core of 3 subunits and several supernumerary subunits. The complex exists as a monomer or a dimer and forms supercomplexes (SCs) in the inner mitochondrial membrane with ubiquinol-cytochrome c oxidoreductase (cytochrome b-c1 complex, complex III, CIII).

It is found in the mitochondrion inner membrane. It catalyses the reaction 4 Fe(II)-[cytochrome c] + O2 + 8 H(+)(in) = 4 Fe(III)-[cytochrome c] + 2 H2O + 4 H(+)(out). Its function is as follows. Component of the cytochrome c oxidase, the last enzyme in the mitochondrial electron transport chain which drives oxidative phosphorylation. The respiratory chain contains 3 multisubunit complexes succinate dehydrogenase (complex II, CII), ubiquinol-cytochrome c oxidoreductase (cytochrome b-c1 complex, complex III, CIII) and cytochrome c oxidase (complex IV, CIV), that cooperate to transfer electrons derived from NADH and succinate to molecular oxygen, creating an electrochemical gradient over the inner membrane that drives transmembrane transport and the ATP synthase. Cytochrome c oxidase is the component of the respiratory chain that catalyzes the reduction of oxygen to water. Electrons originating from reduced cytochrome c in the intermembrane space (IMS) are transferred via the dinuclear copper A center (CU(A)) of subunit 2 and heme A of subunit 1 to the active site in subunit 1, a binuclear center (BNC) formed by heme A3 and copper B (CU(B)). The BNC reduces molecular oxygen to 2 water molecules using 4 electrons from cytochrome c in the IMS and 4 protons from the mitochondrial matrix. This chain is Cytochrome c oxidase subunit 3 (COX3), found in Helianthus annuus (Common sunflower).